The chain runs to 159 residues: Probable chemoreceptor glutamine deamidase CheD 1 (159 aa).

This sequence belongs to the CheD family.

It carries out the reaction L-glutaminyl-[protein] + H2O = L-glutamyl-[protein] + NH4(+). Probably deamidates glutamine residues to glutamate on methyl-accepting chemotaxis receptors (MCPs), playing an important role in chemotaxis. This Methanosarcina acetivorans (strain ATCC 35395 / DSM 2834 / JCM 12185 / C2A) protein is Probable chemoreceptor glutamine deamidase CheD 1.